A 605-amino-acid chain; its full sequence is MAGLYSLGVSVFSDQGGRKYMEDVTQIVVEPEPTAEEKPSPRRSLSQPLPPRPSPAALPGGEVSGKGPAVAAREARDPLPDAGASPAPSRCCRRRSSVAFFAVCDGHGGREAAQFAREHLWGFIKKQKGFTSSEPAKVCAAIRKGFLACHLAMWKKLAEWPKTMTGLPSTSGTTASVVIIRGMKMYVAHVGDSGVVLGIQDDPKDDFVRAVEVTQDHKPELPKERERIEGLGGSVMNKSGVNRVVWKRPRLTHNGPVRRSTVIDQIPFLAVARALGDLWSYDFFSGEFVVSPEPDTSVHTLDPQKHKYIILGSDGLWNMIPPQDAISMCQDQEEKKYLMGEHGQSCAKMLVNRALGRWRQRMLRADNTSAIVICISPEVDNQGNFTNEDELYLNLTDSPSYNSQETCVMTPSPCSTPPVKSLEEDPWPRVNSKDHIPALVRSNAFSENFLEVSAEIARENVQGVVIPSKDPEPLEENCAKALTLRIHDSLNNSLPIGLVPTNSTNTVMDQKNLKMSTPGQMKAQEIERTPPTNFKRTLEESNSGPLMKKHRRNGLSRSSGAQPASLPTTSQRKNSVKLTMRRRLRGQKKIGNPLLHQHRKTVCVC.

An interaction with CHEK1 region spans residues 1 to 101; the sequence is MAGLYSLGVS…CRRRSSVAFF (101 aa). The 368-residue stretch at 8–375 folds into the PPM-type phosphatase domain; sequence GVSVFSDQGG…DNTSAIVICI (368 aa). The disordered stretch occupies residues 28-90; the sequence is VVEPEPTAEE…DAGASPAPSR (63 aa). Phosphoserine occurs at positions 40 and 85. Residues D105, G106, D314, and D366 each coordinate Mn(2+). The tract at residues 516-591 is disordered; that stretch reads STPGQMKAQE…RRLRGQKKIG (76 aa). Polar residues-rich tracts occupy residues 530 to 544 and 555 to 577; these read PPTNFKRTLEESNSG and LSRSSGAQPASLPTTSQRKNSVK. The segment covering 579–588 has biased composition (basic residues); that stretch reads TMRRRLRGQK.

Belongs to the PP2C family. Interacts with CHEK1 and CHEK2; dephosphorylates them. Interacts with MAPK14. Requires Mg(2+) as cofactor. It depends on Mn(2+) as a cofactor. Expressed in fetal and adult brain. Also detected in fetal liver and skeletal muscle, but not in their adult counterparts.

Its subcellular location is the nucleus. It localises to the cytoplasm. The protein localises to the cytosol. It carries out the reaction O-phospho-L-seryl-[protein] + H2O = L-seryl-[protein] + phosphate. It catalyses the reaction O-phospho-L-threonyl-[protein] + H2O = L-threonyl-[protein] + phosphate. Involved in the negative regulation of p53 expression. Required for the relief of p53-dependent checkpoint mediated cell cycle arrest. Binds to and dephosphorylates 'Ser-15' of TP53 and 'Ser-345' of CHEK1 which contributes to the functional inactivation of these proteins. Mediates MAPK14 dephosphorylation and inactivation. Is also an important regulator of global heterochromatin silencing and critical in maintaining genome integrity. The protein is Protein phosphatase 1D (PPM1D) of Homo sapiens (Human).